A 299-amino-acid polypeptide reads, in one-letter code: 4-hydroxybenzoate octaprenyltransferase (299 aa).

The next 7 membrane-spanning stretches (helical) occupy residues 31 to 51 (IGIY…ADGL), 54 to 74 (WDVL…GCVI), 105 to 125 (VLFF…TNPL), 148 to 168 (QLPQ…AFAA), 177 to 197 (IWVL…FYAM), 241 to 261 (FGLG…FAYQ), and 277 to 297 (FLHN…DKLI).

This sequence belongs to the UbiA prenyltransferase family. The cofactor is Mg(2+).

The protein resides in the cell inner membrane. The enzyme catalyses all-trans-octaprenyl diphosphate + 4-hydroxybenzoate = 4-hydroxy-3-(all-trans-octaprenyl)benzoate + diphosphate. It participates in cofactor biosynthesis; ubiquinone biosynthesis. Catalyzes the prenylation of para-hydroxybenzoate (PHB) with an all-trans polyprenyl group. Mediates the second step in the final reaction sequence of ubiquinone-8 (UQ-8) biosynthesis, which is the condensation of the polyisoprenoid side chain with PHB, generating the first membrane-bound Q intermediate 3-octaprenyl-4-hydroxybenzoate. This is 4-hydroxybenzoate octaprenyltransferase from Saccharophagus degradans (strain 2-40 / ATCC 43961 / DSM 17024).